Consider the following 264-residue polypeptide: Claudin-18 (264 aa).

The Cytoplasmic portion of the chain corresponds to M1 to C6. Residues Q7–M27 form a helical membrane-spanning segment. The Extracellular segment spans residues D28–R80. Residues A81–L101 form a helical membrane-spanning segment. Topologically, residues K102–G122 are cytoplasmic. Residues I123 to L143 traverse the membrane as a helical segment. Residues V144–A176 lie on the Extracellular side of the membrane. Residues A177–I197 traverse the membrane as a helical segment. At A198–V264 the chain is on the cytoplasmic side. A required for role in regulation of RANKL-induced osteoclast differentiation region spans residues A198–V264. Residue S217 is modified to Phosphoserine. The disordered stretch occupies residues K241 to V264. The segment covering K242–V264 has biased composition (basic and acidic residues).

The protein belongs to the claudin family. Interacts with TJP2/ZO-2. Interacts with TJP1/ZO-1. Interacts with YAP1 (phosphorylated); the interaction sequesters YAP1 away from the nucleus and thereby restricts transcription of YAP1 target genes. As to quaternary structure, interacts with CLDN19. In terms of tissue distribution, expressed in the lung (at protein level). Expressed in lung. Expressed in the stomach. As to expression, expressed in lung. In terms of tissue distribution, expressed in stomach. Expressed in bone. Expressed in stomach.

The protein resides in the cell junction. It localises to the tight junction. The protein localises to the cell membrane. Its subcellular location is the lateral cell membrane. Its function is as follows. Involved in alveolar fluid homeostasis via regulation of alveolar epithelial tight junction composition and therefore ion transport and solute permeability, potentially via downstream regulation of the actin cytoskeleton organization and beta-2-adrenergic signaling. Required for lung alveolarization and maintenance of the paracellular alveolar epithelial barrier. Acts to maintain epithelial progenitor cell proliferation and organ size, via regulation of YAP1 localization away from the nucleus and thereby restriction of YAP1 target gene transcription. Acts as a negative regulator of RANKL-induced osteoclast differentiation, potentially via relocation of TJP2/ZO-2 away from the nucleus, subsequently involved in bone resorption in response to calcium deficiency. Mediates the osteoprotective effects of estrogen, potentially via acting downstream of estrogen signaling independently of RANKL signaling pathways. Involved in the maintenance of homeostasis of the alveolar microenvironment via regulation of pH and subsequent T-cell activation in the alveolar space, is therefore indirectly involved in limiting C.neoformans infection. In terms of biological role, required for the formation of the gastric paracellular barrier via its role in tight junction formation, thereby involved in the response to gastric acidification. The protein is Claudin-18 (Cldn18) of Mus musculus (Mouse).